We begin with the raw amino-acid sequence, 118 residues long: Large ribosomal subunit protein bL20 (118 aa).

It belongs to the bacterial ribosomal protein bL20 family.

In terms of biological role, binds directly to 23S ribosomal RNA and is necessary for the in vitro assembly process of the 50S ribosomal subunit. It is not involved in the protein synthesizing functions of that subunit. The sequence is that of Large ribosomal subunit protein bL20 from Tolumonas auensis (strain DSM 9187 / NBRC 110442 / TA 4).